Here is a 1073-residue protein sequence, read N- to C-terminus: Semaphorin-6D (1073 aa).

The first 20 residues, 1-20 (MRVFLLCAYILLLMVSQLRA), serve as a signal peptide directing secretion. Residues 21–662 (VSFPEDDEPL…GESNQMVHMN (642 aa)) are Extracellular-facing. In terms of domain architecture, Sema spans 27-512 (DEPLNTVDYH…FSSCIIRIPL (486 aa)). Asn51 carries N-linked (GlcNAc...) asparagine glycosylation. 4 disulfide bridges follow: Cys108–Cys118, Cys136–Cys145, Cys259–Cys370, and Cys284–Cys329. The N-linked (GlcNAc...) asparagine glycan is linked to Asn283. N-linked (GlcNAc...) asparagine glycosylation is found at Asn435 and Asn461. 4 cysteine pairs are disulfide-bonded: Cys477–Cys506, Cys515–Cys533, Cys521–Cys568, and Cys525–Cys541. Residues 514–569 (RCERYGSCKKSCIASRDPYCGWLSQGSCGRVTPGMLAEGYEQDTEFGNTAHLGDCH) form the PSI domain. N-linked (GlcNAc...) asparagine glycosylation is present at Asn631. Residues 663-683 (VLITCVFAAFVLGAFIAGVAV) form a helical membrane-spanning segment. Residues 684–1073 (YCYRDMFVRK…SVRPLNKYTY (390 aa)) lie on the Cytoplasmic side of the membrane. Phosphoserine is present on residues Ser723, Ser734, and Ser744. 5 disordered regions span residues 744-775 (SRKE…PTPE), 787-825 (AMKS…GHIP), 839-874 (TSFS…RSVD), 914-1005 (SMSE…PTPT), and 1021-1073 (LQPS…KYTY). Thr773 bears the Phosphothreonine mark. Positions 790 to 805 (SHSEKAHGHGASRKET) are enriched in basic and acidic residues. 3 positions are modified to phosphoserine: Ser931, Ser957, and Ser983. The segment covering 931-942 (SPPSTLPRNSPT) has biased composition (polar residues). Polar residues-rich tracts occupy residues 980–995 (NLNS…QPSM) and 1021–1037 (LQPS…NGTL).

The protein belongs to the semaphorin family.

It is found in the cell membrane. It localises to the cytoplasm. Its function is as follows. Shows growth cone collapsing activity on dorsal root ganglion (DRG) neurons in vitro. May be a stop signal for the DRG neurons in their target areas, and possibly also for other neurons. May also be involved in the maintenance and remodeling of neuronal connections. Ligand of TREM2 with PLXNA1 as coreceptor in dendritic cells, plays a role in the generation of immune responses and skeletal homeostasis. The chain is Semaphorin-6D from Homo sapiens (Human).